A 72-amino-acid chain; its full sequence is Translation initiation factor IF-1 (72 aa).

One can recognise an S1-like domain in the interval 1–72; that stretch reads MSKDDVIEID…DKGRITYRYK (72 aa).

Belongs to the IF-1 family. In terms of assembly, component of the 30S ribosomal translation pre-initiation complex which assembles on the 30S ribosome in the order IF-2 and IF-3, IF-1 and N-formylmethionyl-tRNA(fMet); mRNA recruitment can occur at any time during PIC assembly.

Its subcellular location is the cytoplasm. Its function is as follows. One of the essential components for the initiation of protein synthesis. Stabilizes the binding of IF-2 and IF-3 on the 30S subunit to which N-formylmethionyl-tRNA(fMet) subsequently binds. Helps modulate mRNA selection, yielding the 30S pre-initiation complex (PIC). Upon addition of the 50S ribosomal subunit IF-1, IF-2 and IF-3 are released leaving the mature 70S translation initiation complex. The chain is Translation initiation factor IF-1 from Campylobacter hominis (strain ATCC BAA-381 / DSM 21671 / CCUG 45161 / LMG 19568 / NCTC 13146 / CH001A).